Consider the following 195-residue polypeptide: UPF0167 protein CbrC (195 aa).

The protein belongs to the UPF0167 family.

This Escherichia coli (strain K12) protein is UPF0167 protein CbrC (cbrC).